A 391-amino-acid polypeptide reads, in one-letter code: 2-deoxy-scyllo-inosose synthase (391 aa).

Residues aspartate 42, 73–76, 105–109, 129–130, 140–142, and 151–152 each bind NAD(+); these read EVHK, GVTGN, TT, SLK, and KN. Residue lysine 142 is part of the active site. Co(2+) is bound at residue glutamate 184. Glutamate 244 is an active-site residue. Histidine 247 and histidine 263 together coordinate Co(2+).

The protein belongs to the sugar phosphate cyclases superfamily. DOI synthase family. The cofactor is NAD(+). Requires Co(2+) as cofactor.

It catalyses the reaction D-glucose 6-phosphate = 2-deoxy-L-scyllo-inosose + phosphate. The protein operates within metabolic intermediate biosynthesis; 2-deoxystreptamine biosynthesis; 2-deoxystreptamine from D-glucose 6-phosphate: step 1/4. It participates in antibiotic biosynthesis; ribostamycin biosynthesis. In terms of biological role, catalyzes the intramolecular carbocycle formation from D-glucose-6-phosphate to 2-deoxy-scyllo-inosose (DOI). This Streptomyces ribosidificus protein is 2-deoxy-scyllo-inosose synthase (rbmA).